The primary structure comprises 425 residues: Enolase (425 aa).

Gln-163 is a (2R)-2-phosphoglycerate binding site. The active-site Proton donor is the Glu-205. Mg(2+) contacts are provided by Asp-242, Glu-285, and Asp-312. (2R)-2-phosphoglycerate contacts are provided by Lys-337, Arg-366, Ser-367, and Lys-388. Residue Lys-337 is the Proton acceptor of the active site.

The protein belongs to the enolase family. The cofactor is Mg(2+).

Its subcellular location is the cytoplasm. The protein resides in the secreted. It localises to the cell surface. The catalysed reaction is (2R)-2-phosphoglycerate = phosphoenolpyruvate + H2O. It participates in carbohydrate degradation; glycolysis; pyruvate from D-glyceraldehyde 3-phosphate: step 4/5. Catalyzes the reversible conversion of 2-phosphoglycerate (2-PG) into phosphoenolpyruvate (PEP). It is essential for the degradation of carbohydrates via glycolysis. In Rhodospirillum rubrum (strain ATCC 11170 / ATH 1.1.1 / DSM 467 / LMG 4362 / NCIMB 8255 / S1), this protein is Enolase.